The following is a 206-amino-acid chain: Hypoxanthine-guanine phosphoribosyltransferase (206 aa).

GMP is bound by residues 110-118 (DEVDDTRTT), Lys154, and 181-187 (WIMYPWE). Asp114 (proton acceptor) is an active-site residue.

It belongs to the purine/pyrimidine phosphoribosyltransferase family. Dimer. Mg(2+) serves as cofactor.

The protein localises to the endoplasmic reticulum. The enzyme catalyses IMP + diphosphate = hypoxanthine + 5-phospho-alpha-D-ribose 1-diphosphate. The catalysed reaction is GMP + diphosphate = guanine + 5-phospho-alpha-D-ribose 1-diphosphate. In terms of biological role, converts guanine to guanosine monophosphate, and hypoxanthine to inosine monophosphate. Transfers the 5-phosphoribosyl group from 5-phosphoribosylpyrophosphate onto the purine. Plays a central role in the generation of purine nucleotides through the purine salvage pathway. This Schizosaccharomyces pombe (strain 972 / ATCC 24843) (Fission yeast) protein is Hypoxanthine-guanine phosphoribosyltransferase (hpt1).